Reading from the N-terminus, the 134-residue chain is MILACDVGLKRIGIAALLNGVILPLEAILRHNRNQASRDLSDLLREKNIQVLVVGKPNESYADTNARIEHFIKLVDFKGEIVFINEDNSSIEAYENLEHLGRKNKRLATKDGRLDSLSACRILERYCQQVLKKD.

Belongs to the YqgF nuclease family.

The protein resides in the cytoplasm. Could be a nuclease involved in processing of the 5'-end of pre-16S rRNA. The protein is Putative pre-16S rRNA nuclease of Helicobacter pylori (strain G27).